Consider the following 235-residue polypeptide: MPKYYCEYCDIYLTHSSPVGRRQHIHGRKHISAKIEYFQNLLREEGITPQNFLGFLNNRNINNPLGNPMMNYMNPNMYMKYNPMKSYHSYSMRSSHPYRLNIHNNKYSRAGYVPPSHHKYSVNPMHNNYHQAHNNYSYPNSINPSNQINYSNNYGSNNFNNSNEFNKNMNEKDNINNNDIHDNKVKTDENDPINNDNLNNTRNFSYEENHYSTDHKKPSFLNPENSKEHIESDIS.

A Matrin-type zinc finger spans residues 4–36 (YYCEYCDIYLTHSSPVGRRQHIHGRKHISAKIE). Residues 131–235 (QAHNNYSYPN…SKEHIESDIS (105 aa)) are disordered. Over residues 134 to 168 (NNYSYPNSINPSNQINYSNNYGSNNFNNSNEFNKN) the composition is skewed to low complexity. Positions 169–189 (MNEKDNINNNDIHDNKVKTDE) are enriched in basic and acidic residues. Over residues 192–203 (PINNDNLNNTRN) the composition is skewed to low complexity. 2 stretches are compositionally biased toward basic and acidic residues: residues 205-217 (SYEE…DHKK) and 225-235 (NSKEHIESDIS).

This sequence belongs to the U1 small nuclear ribonucleoprotein C family. U1 snRNP is composed of the 7 core Sm proteins B/B', D1, D2, D3, E, F and G that assemble in a heptameric protein ring on the Sm site of the small nuclear RNA to form the core snRNP, and at least 3 U1 snRNP-specific proteins U1-70K, U1-A and U1-C. U1-C interacts with U1 snRNA and the 5' splice-site region of the pre-mRNA.

The protein resides in the nucleus. In terms of biological role, component of the spliceosomal U1 snRNP, which is essential for recognition of the pre-mRNA 5' splice-site and the subsequent assembly of the spliceosome. U1-C is directly involved in initial 5' splice-site recognition for both constitutive and regulated alternative splicing. The interaction with the 5' splice-site seems to precede base-pairing between the pre-mRNA and the U1 snRNA. Stimulates commitment or early (E) complex formation by stabilizing the base pairing of the 5' end of the U1 snRNA and the 5' splice-site region. The sequence is that of U1 small nuclear ribonucleoprotein C from Plasmodium falciparum (isolate 3D7).